Here is a 524-residue protein sequence, read N- to C-terminus: Peptide chain release factor 3 (524 aa).

The tr-type G domain occupies 11 to 278 (AKRRTFAIIS…SFVQYAPEPG (268 aa)). GTP contacts are provided by residues 20-27 (SHPDAGKT), 88-92 (DTPGH), and 142-145 (NKLD).

The protein belongs to the TRAFAC class translation factor GTPase superfamily. Classic translation factor GTPase family. PrfC subfamily.

The protein resides in the cytoplasm. Increases the formation of ribosomal termination complexes and stimulates activities of RF-1 and RF-2. It binds guanine nucleotides and has strong preference for UGA stop codons. It may interact directly with the ribosome. The stimulation of RF-1 and RF-2 is significantly reduced by GTP and GDP, but not by GMP. The protein is Peptide chain release factor 3 of Lacticaseibacillus paracasei (strain ATCC 334 / BCRC 17002 / CCUG 31169 / CIP 107868 / KCTC 3260 / NRRL B-441) (Lactobacillus paracasei).